The following is a 323-amino-acid chain: Lipoyl synthase (323 aa).

[4Fe-4S] cluster is bound by residues C61, C66, C72, C87, C91, C94, and S300. The Radical SAM core domain maps to W73–L289.

Belongs to the radical SAM superfamily. Lipoyl synthase family. It depends on [4Fe-4S] cluster as a cofactor.

Its subcellular location is the cytoplasm. The catalysed reaction is [[Fe-S] cluster scaffold protein carrying a second [4Fe-4S](2+) cluster] + N(6)-octanoyl-L-lysyl-[protein] + 2 oxidized [2Fe-2S]-[ferredoxin] + 2 S-adenosyl-L-methionine + 4 H(+) = [[Fe-S] cluster scaffold protein] + N(6)-[(R)-dihydrolipoyl]-L-lysyl-[protein] + 4 Fe(3+) + 2 hydrogen sulfide + 2 5'-deoxyadenosine + 2 L-methionine + 2 reduced [2Fe-2S]-[ferredoxin]. It participates in protein modification; protein lipoylation via endogenous pathway; protein N(6)-(lipoyl)lysine from octanoyl-[acyl-carrier-protein]: step 2/2. Its function is as follows. Catalyzes the radical-mediated insertion of two sulfur atoms into the C-6 and C-8 positions of the octanoyl moiety bound to the lipoyl domains of lipoate-dependent enzymes, thereby converting the octanoylated domains into lipoylated derivatives. In Rhizobium etli (strain CIAT 652), this protein is Lipoyl synthase.